We begin with the raw amino-acid sequence, 458 residues long: Ammonium transporter Rh type B (458 aa).

Topologically, residues 1–13 are cytoplasmic; it reads MAGSPSRAAGRRL. Residues 14–34 form a helical membrane-spanning segment; it reads QLPLLCLFLQGATAVLFAVFV. Over 35 to 61 the chain is Extracellular; the sequence is RYNHKTDAALWHRSNHSNADNEFYFRY. The N-linked (GlcNAc...) asparagine glycan is linked to Asn49. A helical membrane pass occupies residues 62-82; it reads PSFQDVHAMVFVGFGFLMVFL. The Cytoplasmic segment spans residues 83–86; the sequence is QRYG. Residues 87–107 traverse the membrane as a helical segment; that stretch reads FSSVGFTFLLAAFALQWSTLV. Residues 108–124 lie on the Extracellular side of the membrane; that stretch reads QGFLHSFHGGHIHVGVE. A helical transmembrane segment spans residues 125-145; the sequence is SMINADFCAGAVLISFGAVLG. The Cytoplasmic segment spans residues 146 to 149; that stretch reads KTGP. A helical transmembrane segment spans residues 150-170; that stretch reads TQLLLMALLEVVLFGINEFVL. The Extracellular portion of the chain corresponds to 171–178; sequence LHLLGVRD. The helical transmembrane segment at 179–201 threads the bilayer; the sequence is AGGSMTIHTFGAYFGLVLSRVLY. The Cytoplasmic segment spans residues 202 to 219; sequence RPQLEKSKHRQGSVYHSD. The chain crosses the membrane as a helical span at residues 220–240; sequence LFAMIGTIFLWIFWPSFNAAL. At 241–251 the chain is on the extracellular side; sequence TALGAGQHRTA. Residues 252 to 272 form a helical membrane-spanning segment; it reads LNTYYSLAASTLGTFALSALV. Over 273 to 282 the chain is Cytoplasmic; the sequence is GEDGRLDMVH. The chain crosses the membrane as a helical span at residues 283–303; sequence IQNAALAGGVVVGTSSEMMLT. Residue Pro304 is a topological domain, extracellular. Residues 305–325 traverse the membrane as a helical segment; that stretch reads FGALAAGFLAGTVSTLGYKFF. Over 326–346 the chain is Cytoplasmic; the sequence is TPILESKFKVQDTCGVHNLHG. A helical membrane pass occupies residues 347–367; that stretch reads MPGVLGALLGVLVAGLATHEA. Topologically, residues 368-393 are extracellular; that stretch reads YGDGLESVFPLIAEGQRSATSQAMHQ. Residues 394 to 414 form a helical membrane-spanning segment; the sequence is LFGLFVTLMFASVGGGLGGLL. The Cytoplasmic segment spans residues 415–458; the sequence is LKLPFLDSPPDSQHYEDQVHWQVPGEHEDKAQRPLRVEEADTQA. Residues 416–424 are interaction with ANK3; it reads KLPFLDSPP. The disordered stretch occupies residues 436-458; sequence QVPGEHEDKAQRPLRVEEADTQA.

This sequence belongs to the ammonium transporter (TC 2.A.49) family. Rh subfamily. Interacts (via C-terminus) with ANK2 and ANK3; required for targeting to the basolateral membrane. N-glycosylated. As to expression, specifically expressed in kidney. Also detected in liver and ovary.

It localises to the cell membrane. It is found in the basolateral cell membrane. It carries out the reaction NH4(+)(in) = NH4(+)(out). It catalyses the reaction methylamine(out) = methylamine(in). The enzyme catalyses CO2(out) = CO2(in). In terms of biological role, ammonium transporter involved in the maintenance of acid-base homeostasis. Transports ammonium and its related derivative methylammonium across the basolateral plasma membrane of epithelial cells likely contributing to renal transepithelial ammonia transport and ammonia metabolism. May transport either NH4(+) or NH3 ammonia species predominantly mediating an electrogenic NH4(+) transport. May act as a CO2 channel providing for renal acid secretion. The sequence is that of Ammonium transporter Rh type B from Homo sapiens (Human).